Reading from the N-terminus, the 311-residue chain is Syndecan-1 (311 aa).

Residues 1 to 22 (MRRAALWLWLCALALRLQPALL) form the signal peptide. The Extracellular segment spans residues 23–255 (HSVAVNMPPE…GLLDRKEVLG (233 aa)). Disordered regions lie at residues 31-85 (PEDQ…PDAI) and 141-244 (TMAP…TGAS). Residues 32–42 (EDQDGSGDDSD) show a composition bias toward acidic residues. Ser37 is a glycosylation site (O-linked (Xyl...) (chondroitin sulfate) serine). The N-linked (GlcNAc...) asparagine glycan is linked to Asn43. Residues Ser45 and Ser47 are each glycosylated (O-linked (Xyl...) (heparan sulfate) serine). Over residues 71-84 (TTTATAPEPTSPDA) the composition is skewed to low complexity. Composition is skewed to basic and acidic residues over residues 151–162 (PHRDVQPDHHET) and 169–180 (GRMEPHRPHVEE). 2 O-linked (Xyl...) (chondroitin sulfate) serine glycosylation sites follow: Ser204 and Ser214. Over residues 215–226 (GENAAGAAGEPG) the composition is skewed to low complexity. The helical transmembrane segment at 256 to 276 (GVIAGGLVGLIFAVCLVGFML) threads the bilayer. The Cytoplasmic portion of the chain corresponds to 277 to 311 (YRMKKKDEGSYSLEEPKQANGGAYQKPTKQEEFYA). The interval 285 to 311 (GSYSLEEPKQANGGAYQKPTKQEEFYA) is disordered. Ser286 carries the phosphoserine modification.

The protein belongs to the syndecan proteoglycan family. Interacts with CDCP1. Interacts (via C-terminus) with TIAM1 (via PDZ domain). Interacts with MDK. Shedding is enhanced by a number of factors such as heparanase, thrombin or EGF. Also by stress and wound healing. PMA-mediated shedding is inhibited by TIMP3.

Its subcellular location is the membrane. It is found in the secreted. It localises to the extracellular exosome. Functionally, cell surface proteoglycan that contains both heparan sulfate and chondroitin sulfate and that links the cytoskeleton to the interstitial matrix. Regulates exosome biogenesis in concert with SDCBP and PDCD6IP. Able to induce its own expression in dental mesenchymal cells and also in the neighboring dental epithelial cells via an MSX1-mediated pathway. This Bos taurus (Bovine) protein is Syndecan-1.